A 419-amino-acid polypeptide reads, in one-letter code: Homeobox-containing protein 1 (419 aa).

An HNF-p1 domain is found at 18–49 (DEPRFTIEQIDLLQRLRRTGMTKHEILHALET). Residues 56-152 (EHSDKFGRRS…GQRSYSFEAS (97 aa)) are disordered. Lysine 60 participates in a covalent cross-link: Glycyl lysine isopeptide (Lys-Gly) (interchain with G-Cter in SUMO2). 2 stretches are compositionally biased toward low complexity: residues 64–73 (RSSYGGSSYG) and 81–93 (ASSSTATASTQTQ). A compositionally biased stretch (polar residues) spans 94–132 (HSGMSPSPSNSYDTSPLPCTTNQNGRENNDRLSTSNGKM). Residue lysine 131 forms a Glycyl lysine isopeptide (Lys-Gly) (interchain with G-Cter in SUMO2) linkage. The 97-residue stretch at 145 to 241 (RSYSFEASEE…PGATLSMRPA (97 aa)) folds into the POU-specific atypical domain. Position 148 is a phosphoserine (serine 148). A Glycyl lysine isopeptide (Lys-Gly) (interchain with G-Cter in SUMO2) cross-link involves residue lysine 161. Serine 170 carries the post-translational modification Phosphoserine. Glycyl lysine isopeptide (Lys-Gly) (interchain with G-Cter in SUMO2) cross-links involve residues lysine 174, lysine 217, and lysine 310. The segment at residues 267-341 (RRGSRFTWRK…NRRKEIKRRA (75 aa)) is a DNA-binding region (homeobox). Residues 352-384 (IDVQSPGGHSNSDDVDGNDYSEQDDSTSHSDHQ) are disordered. Residues 364–376 (DDVDGNDYSEQDD) are compositionally biased toward acidic residues. Lysine 412 participates in a covalent cross-link: Glycyl lysine isopeptide (Lys-Gly) (interchain with G-Cter in SUMO1); alternate. A Glycyl lysine isopeptide (Lys-Gly) (interchain with G-Cter in SUMO2); alternate cross-link involves residue lysine 412.

As to quaternary structure, associates with the telomerase holoenzyme complex. Interacts with DKC1, XRCC6 and COIL.

It is found in the nucleus. The protein resides in the cytoplasm. The protein localises to the chromosome. It localises to the telomere. Its subcellular location is the cajal body. It is found in the PML body. In terms of biological role, binds directly to 5'-TTAGGG-3' repeats in telomeric DNA. Associates with the telomerase complex at sites of active telomere processing and positively regulates telomere elongation. Important for TERT binding to chromatin, indicating a role in recruitment of the telomerase complex to telomeres. Also plays a role in the alternative lengthening of telomeres (ALT) pathway in telomerase-negative cells where it promotes formation and/or maintenance of ALT-associated promyelocytic leukemia bodies (APBs). Enhances formation of telomere C-circles in ALT cells, suggesting a possible role in telomere recombination. Might also be involved in the DNA damage response at telomeres. The polypeptide is Homeobox-containing protein 1 (Hmbox1) (Mus musculus (Mouse)).